Consider the following 337-residue polypeptide: Cytoskeleton protein RodZ (337 aa).

Residues 1-111 (MNTEATHDQN…LGKRRKKRDG (111 aa)) lie on the Cytoplasmic side of the membrane. One can recognise an HTH cro/C1-type domain in the interval 19-71 (LRNAREQLGLSQQAVAERLCLKVSTVRDIEEDKAPADLASTFLRGYIRSYARL). Positions 30–49 (QQAVAERLCLKVSTVRDIEE) form a DNA-binding region, H-T-H motif. A helical; Signal-anchor for type II membrane protein membrane pass occupies residues 112–132 (WLMTFTWLVLFVVIGLSGAWW). Over 133 to 337 (WQDHKAQQEE…TLNAEQSPAQ (205 aa)) the chain is Periplasmic. The segment covering 145–167 (TMADQSSAELSSNSEQGQSVPLN) has biased composition (polar residues). Residues 145–236 (TMADQSSAEL…TAATTPDGAA (92 aa)) form a disordered region. Residues 168 to 207 (TSTTTDPATTSTPPASVDTTATNTQTPAVTAPAPAVDPQQ) are compositionally biased toward low complexity. The span at 208-218 (NAVVSPSQANV) shows a compositional bias: polar residues. Residues 219–236 (DTAATPAPTAATTPDGAA) are compositionally biased toward low complexity.

This sequence belongs to the RodZ family.

The protein resides in the cell inner membrane. Functionally, cytoskeletal protein that is involved in cell-shape control through regulation of the length of the long axis. This is Cytoskeleton protein RodZ from Escherichia coli O139:H28 (strain E24377A / ETEC).